Reading from the N-terminus, the 459-residue chain is MPLPLVAIVGRPNVGKSTLVNRMAGVRSAIVHDEPGVTRDRLYQEVEWNGRRLRVVDTGGLVFGDDSEFLPHIRQQAMAAMAEAQAVIFVVDGREGLTPADVEVADWLRKQPLPVVVAVNKCESGQMGLAQAAAFWELGLGDPIPCSGIHGNGVAELLEAVLAHLPEVTAEAAGEPDPIAVSIVGRPNVGKSSLLNRLVGSERAIVSPISGTTRDAIDTVVTWEGQPYRLIDTAGIRKKNRVQYGIEFFSINRAFKAIQRSDAVLLVIDALEGVTEQDQRLAGRIEEEGRACVVVVNKWDAVENKDTHTINEFTREIRDRLYFIEWAPLLFVSALTGQRTHKIFEQVNTVVAAHRKRVPTAVVNEVLQDALAWQSPPTNRQGKQGRIYYGTQVADRPPTFVLFVNDPDLFKDNYRRFLEKHFRQNLDFTGTPIRFLWRGKSERLVGRAVRKLERSLTSR.

2 EngA-type G domains span residues Pro4–Thr169 and Ile179–Arg355. GTP is bound by residues Gly10 to Ser17, Asp57 to Leu61, Asn120 to Glu123, Gly185 to Ser192, Asp232 to Ile236, and Asn297 to Asp300. Positions Lys356–Ser441 constitute a KH-like domain.

It belongs to the TRAFAC class TrmE-Era-EngA-EngB-Septin-like GTPase superfamily. EngA (Der) GTPase family. Associates with the 50S ribosomal subunit.

In terms of biological role, GTPase that plays an essential role in the late steps of ribosome biogenesis. This Synechococcus sp. (strain JA-2-3B'a(2-13)) (Cyanobacteria bacterium Yellowstone B-Prime) protein is GTPase Der.